Consider the following 264-residue polypeptide: tRNA pseudouridine synthase A (264 aa).

The active-site Nucleophile is Asp54. Tyr113 is a substrate binding site.

This sequence belongs to the tRNA pseudouridine synthase TruA family. In terms of assembly, homodimer.

It catalyses the reaction uridine(38/39/40) in tRNA = pseudouridine(38/39/40) in tRNA. Formation of pseudouridine at positions 38, 39 and 40 in the anticodon stem and loop of transfer RNAs. This is tRNA pseudouridine synthase A from Leptospira biflexa serovar Patoc (strain Patoc 1 / Ames).